A 275-amino-acid chain; its full sequence is Protein MGF 110-11L (275 aa).

A helical membrane pass occupies residues 5 to 25; it reads LGLLLGYSVLILTHELPDLSA. N-linked (GlcNAc...) asparagine; by host glycosylation is present at asparagine 61. Helical transmembrane passes span 127 to 147 and 149 to 169; these read HCCF…FAYH and NLHL…IWLS.

Belongs to the asfivirus MGF 110 family.

Its subcellular location is the host membrane. Its function is as follows. Plays a role in virus cell tropism, and may be required for efficient virus replication in macrophages. The protein is Protein MGF 110-11L of African swine fever virus (isolate Pig/Kenya/KEN-50/1950) (ASFV).